Consider the following 332-residue polypeptide: Glycerol-3-phosphate dehydrogenase [NAD(P)+] (332 aa).

The NADPH site is built by Trp-15, Arg-35, and Lys-108. Sn-glycerol 3-phosphate-binding residues include Lys-108, Gly-137, and Ser-139. Ala-141 contacts NADPH. The sn-glycerol 3-phosphate site is built by Lys-192, Asp-245, Ser-255, Arg-256, and Asn-257. Lys-192 serves as the catalytic Proton acceptor. Arg-256 is a binding site for NADPH. NADPH is bound by residues Leu-278 and Glu-280.

This sequence belongs to the NAD-dependent glycerol-3-phosphate dehydrogenase family.

Its subcellular location is the cytoplasm. It catalyses the reaction sn-glycerol 3-phosphate + NAD(+) = dihydroxyacetone phosphate + NADH + H(+). The enzyme catalyses sn-glycerol 3-phosphate + NADP(+) = dihydroxyacetone phosphate + NADPH + H(+). It functions in the pathway membrane lipid metabolism; glycerophospholipid metabolism. In terms of biological role, catalyzes the reduction of the glycolytic intermediate dihydroxyacetone phosphate (DHAP) to sn-glycerol 3-phosphate (G3P), the key precursor for phospholipid synthesis. The chain is Glycerol-3-phosphate dehydrogenase [NAD(P)+] from Methylobacterium radiotolerans (strain ATCC 27329 / DSM 1819 / JCM 2831 / NBRC 15690 / NCIMB 10815 / 0-1).